The primary structure comprises 85 residues: Large ribosomal subunit protein bL27 (85 aa).

The disordered stretch occupies residues 1-22; the sequence is MAHKKAGGSTKNGRDSESKRLG.

The protein belongs to the bacterial ribosomal protein bL27 family.

The chain is Large ribosomal subunit protein bL27 from Idiomarina loihiensis (strain ATCC BAA-735 / DSM 15497 / L2-TR).